A 393-amino-acid chain; its full sequence is NAD(P)H-quinone oxidoreductase subunit H, chloroplastic (393 aa).

The protein belongs to the complex I 49 kDa subunit family. In terms of assembly, NDH is composed of at least 16 different subunits, 5 of which are encoded in the nucleus.

The protein localises to the plastid. The protein resides in the chloroplast thylakoid membrane. It carries out the reaction a plastoquinone + NADH + (n+1) H(+)(in) = a plastoquinol + NAD(+) + n H(+)(out). It catalyses the reaction a plastoquinone + NADPH + (n+1) H(+)(in) = a plastoquinol + NADP(+) + n H(+)(out). NDH shuttles electrons from NAD(P)H:plastoquinone, via FMN and iron-sulfur (Fe-S) centers, to quinones in the photosynthetic chain and possibly in a chloroplast respiratory chain. The immediate electron acceptor for the enzyme in this species is believed to be plastoquinone. Couples the redox reaction to proton translocation, and thus conserves the redox energy in a proton gradient. The protein is NAD(P)H-quinone oxidoreductase subunit H, chloroplastic of Lolium perenne (Perennial ryegrass).